A 209-amino-acid chain; its full sequence is Large ribosomal subunit protein uL3 (209 aa).

The interval 113–155 (TSRGHGYQGNIKRHHQSRGPETHGSRYHRIPGSMGSIINRVPK) is disordered.

The protein belongs to the universal ribosomal protein uL3 family. In terms of assembly, part of the 50S ribosomal subunit. Forms a cluster with proteins L14 and L19.

In terms of biological role, one of the primary rRNA binding proteins, it binds directly near the 3'-end of the 23S rRNA, where it nucleates assembly of the 50S subunit. This Lactobacillus delbrueckii subsp. bulgaricus (strain ATCC 11842 / DSM 20081 / BCRC 10696 / JCM 1002 / NBRC 13953 / NCIMB 11778 / NCTC 12712 / WDCM 00102 / Lb 14) protein is Large ribosomal subunit protein uL3.